The chain runs to 1043 residues: MRTKLDGRIRTQIENGVASGHRSMFAVVGDKARDQVPILYHILSKSTVSARPNVLWCYKKELSFSTHRAKKAKKMKKATTTISGSLPDADPFDVFISSTQIRYCYYNETEKILGNTFGVLVLQDFEAMTPNLLARTIETIEGGGMVILLMQSVRSLRQLYTISMDVHNRYRTEAHNEITARFNERFILSLASCSSVLVLDDQLRVLPISSHIENVEAIPASQKKIQSESDAELASLKEAMKETKPIGPLLSRARTACQAKALLRFLDVITEKQSNVTCSLTAGRGRGKSAAVGLSLAGAIAFGYTNIFVTSPSPENLKTLFEFVVKGFDALDYQEHTDYELIQSANPEFKNCLVRINVFREHKQTIQYISPTDVQKLGQCELIVIDEAAAIPLPLVKELISGPYISFLSSTINGYEGTGRSLSLKLLQQLRQQSAGGEAKEGKSASNKGKTLHEMHMEESIRYKPGDKIEKWLNRLLCLDATNCQLKLECGTPPPAACELYIVNRDTLFSFHDASEAFLQQVMAIFVSAHYKNSPNDLQMLSDAPAHNLFVLMAPIDKSRKTIPEVLAVVQVCLEGRLDSDNIQNGLESGKRAAGDLLPWTVSQQFMDKQFGTLCGGRIVRVAVHPDYQSMGYGGRAVQLIEQYYLGLATSLDEEEKAPAPPSKTVIKQVKDGHTVELLEERIEPRADLPPLLQRLDERKPERLDYLGVSFGLTVPLLKFWKRNEFVPVYIRQNSNDITGEHTCIILKGLEHGGSDSDEEPSATWLPVYWREFRRRIVNLLSFDFSSFPAQMALSLLQLKNKHVEKQMKRLVIERSELAIHLSNTDLRRMSQYGRNMVDSHIITDILPIVAKLNFEQRLPQELKLAVTQSAILLARGLQHKHFEDISKELDLPMNQIFALLTKAIRRIGDWFDEVCETAVRENLDKEAEASAANKPTSSLPKAVPLANLEDELESAAKEIRARHDRDRKALLAELGNELQKYEIIQDEKELAEAYESVNMKYANKLVSVKSKRTAIQAAIPDAKDPANKNAKKKKRFSSGGRR.

ATP contacts are provided by residues 285–294 (GRGKSAAVGL) and arginine 462. The N-acetyltransferase domain maps to 551–736 (VLMAPIDKSR…VPVYIRQNSN (186 aa)). Residues 622–624 (VAV), 629–635 (QSMGYGG), and arginine 723 each bind acetyl-CoA. The interval 1020 to 1043 (IPDAKDPANKNAKKKKRFSSGGRR) is disordered. A compositionally biased stretch (basic residues) spans 1030–1043 (NAKKKKRFSSGGRR).

It belongs to the RNA cytidine acetyltransferase family. NAT10 subfamily. As to quaternary structure, part of the small subunit (SSU) processome, composed of more than 70 proteins and the RNA chaperone small nucleolar RNA (snoRNA) U3.

Its subcellular location is the nucleus. The protein localises to the nucleolus. The catalysed reaction is a cytidine in 18S rRNA + acetyl-CoA + ATP + H2O = an N(4)-acetylcytidine in 18S rRNA + ADP + phosphate + CoA + H(+). The enzyme catalyses a cytidine in tRNA + acetyl-CoA + ATP + H2O = an N(4)-acetylcytidine in tRNA + ADP + phosphate + CoA + H(+). Its function is as follows. RNA cytidine acetyltransferase with specificity toward both 18S rRNA and tRNAs. Catalyzes the formation of N(4)-acetylcytidine (ac4C) in 18S rRNA. Required for early nucleolar cleavages of precursor rRNA at sites A0, A1 and A2 during 18S rRNA synthesis. Catalyzes the formation of ac4C in serine and leucine tRNAs. Requires a tRNA-binding adapter protein for full tRNA acetyltransferase activity but not for 18S rRNA acetylation. Part of the small subunit (SSU) processome, first precursor of the small eukaryotic ribosomal subunit. During the assembly of the SSU processome in the nucleolus, many ribosome biogenesis factors, an RNA chaperone and ribosomal proteins associate with the nascent pre-rRNA and work in concert to generate RNA folding, modifications, rearrangements and cleavage as well as targeted degradation of pre-ribosomal RNA by the RNA exosome. In Caenorhabditis elegans, this protein is RNA cytidine acetyltransferase.